A 408-amino-acid chain; its full sequence is L,D-transpeptidase 2 (408 aa).

An N-terminal signal peptide occupies residues 1 to 34 (MPKVGIAAQAGRTRVRRAWLTALMMTAVMIGAVA). Cysteine 35 carries the N-palmitoyl cysteine lipid modification. Residue cysteine 35 is the site of S-diacylglycerol cysteine attachment. Residues aspartate 232, glutamate 235, and glycine 236 each coordinate Ca(2+). The 126-residue stretch at 253 to 378 (VIATADDNTK…VKRGDIVEVV (126 aa)) folds into the L,D-TPase catalytic domain. Substrate contacts are provided by residues tyrosine 318 and 331 to 332 (SG). The active-site Proton donor/acceptor is histidine 336. Cysteine 354 (nucleophile) is an active-site residue. Asparagine 356 contacts substrate.

Monomer.

Its subcellular location is the cell membrane. Its pathway is cell wall biogenesis; peptidoglycan biosynthesis. With respect to regulation, is irreversibly inactivated by the beta-lactams carbapenems via the formation of a covalent adduct resulting from acylation of the catalytic Cys. Functionally, generates 3-&gt;3 cross-links in peptidoglycan, catalyzing the cleavage of the mDap(3)-D-Ala(4) bond of a tetrapeptide donor stem and the formation of a bond between the carbonyl of mDap(3) of the donor stem and the side chain of mDap(3) of the acceptor stem. Is specific for donor substrates containing a stem tetrapeptide since it cannot use pentapeptide stems. Is essential for virulence in a mouse model of acute infection. In Mycobacterium tuberculosis (strain CDC 1551 / Oshkosh), this protein is L,D-transpeptidase 2 (ldtB).